A 319-amino-acid chain; its full sequence is Acetyl-coenzyme A carboxylase carboxyl transferase subunit beta, chloroplastic (319 aa).

One can recognise a CoA carboxyltransferase N-terminal domain in the interval 47-319; the sequence is LWVQCDNCES…ELFYVLQSSS (273 aa). Zn(2+)-binding residues include C51, C54, C70, and C73. The C4-type zinc-finger motif lies at 51-73; the sequence is CDNCESLLYIRFLRENKSVCEEC.

Belongs to the AccD/PCCB family. As to quaternary structure, acetyl-CoA carboxylase is a heterohexamer composed of biotin carboxyl carrier protein, biotin carboxylase and 2 subunits each of ACCase subunit alpha and ACCase plastid-coded subunit beta (accD). Zn(2+) serves as cofactor.

It is found in the plastid. It localises to the chloroplast stroma. The catalysed reaction is N(6)-carboxybiotinyl-L-lysyl-[protein] + acetyl-CoA = N(6)-biotinyl-L-lysyl-[protein] + malonyl-CoA. Its pathway is lipid metabolism; malonyl-CoA biosynthesis; malonyl-CoA from acetyl-CoA: step 1/1. Component of the acetyl coenzyme A carboxylase (ACC) complex. Biotin carboxylase (BC) catalyzes the carboxylation of biotin on its carrier protein (BCCP) and then the CO(2) group is transferred by the transcarboxylase to acetyl-CoA to form malonyl-CoA. The polypeptide is Acetyl-coenzyme A carboxylase carboxyl transferase subunit beta, chloroplastic (Picea abies (Norway spruce)).